Consider the following 429-residue polypeptide: Glutamate-1-semialdehyde 2,1-aminomutase (429 aa).

Lys265 carries the post-translational modification N6-(pyridoxal phosphate)lysine.

This sequence belongs to the class-III pyridoxal-phosphate-dependent aminotransferase family. HemL subfamily. In terms of assembly, homodimer. The cofactor is pyridoxal 5'-phosphate.

The protein localises to the cytoplasm. The catalysed reaction is (S)-4-amino-5-oxopentanoate = 5-aminolevulinate. The protein operates within porphyrin-containing compound metabolism; protoporphyrin-IX biosynthesis; 5-aminolevulinate from L-glutamyl-tRNA(Glu): step 2/2. This chain is Glutamate-1-semialdehyde 2,1-aminomutase, found in Azotobacter vinelandii (strain DJ / ATCC BAA-1303).